Consider the following 297-residue polypeptide: Urease accessory protein UreD (297 aa).

The segment covering 1-18 (MNSSAASPPAVSPHAAPS) has biased composition (low complexity). Disordered stretches follow at residues 1 to 20 (MNSS…PSRT) and 178 to 201 (VDQA…PRRR).

This sequence belongs to the UreD family. UreD, UreF and UreG form a complex that acts as a GTP-hydrolysis-dependent molecular chaperone, activating the urease apoprotein by helping to assemble the nickel containing metallocenter of UreC. The UreE protein probably delivers the nickel.

Its subcellular location is the cytoplasm. Its function is as follows. Required for maturation of urease via the functional incorporation of the urease nickel metallocenter. In Parafrankia sp. (strain EAN1pec), this protein is Urease accessory protein UreD.